Reading from the N-terminus, the 727-residue chain is Fatty acid oxidation complex subunit alpha (727 aa).

An enoyl-CoA hydratase region spans residues 16–205; the sequence is NQTASVFSFD…RLGLVDDAVP (190 aa). A 3-hydroxyacyl-CoA dehydrogenase region spans residues 321 to 727; the sequence is AKIKHVGILG…MAEQNKSFYP (407 aa).

The protein in the N-terminal section; belongs to the enoyl-CoA hydratase/isomerase family. This sequence in the central section; belongs to the 3-hydroxyacyl-CoA dehydrogenase family. In terms of assembly, heterotetramer of two alpha chains (FadJ) and two beta chains (FadI).

It localises to the cytoplasm. The enzyme catalyses a (3S)-3-hydroxyacyl-CoA = a (2E)-enoyl-CoA + H2O. The catalysed reaction is a 4-saturated-(3S)-3-hydroxyacyl-CoA = a (3E)-enoyl-CoA + H2O. It catalyses the reaction a (3S)-3-hydroxyacyl-CoA + NAD(+) = a 3-oxoacyl-CoA + NADH + H(+). It carries out the reaction (3S)-3-hydroxybutanoyl-CoA = (3R)-3-hydroxybutanoyl-CoA. It participates in lipid metabolism; fatty acid beta-oxidation. Its function is as follows. Catalyzes the formation of a hydroxyacyl-CoA by addition of water on enoyl-CoA. Also exhibits 3-hydroxyacyl-CoA epimerase and 3-hydroxyacyl-CoA dehydrogenase activities. This is Fatty acid oxidation complex subunit alpha from Photorhabdus laumondii subsp. laumondii (strain DSM 15139 / CIP 105565 / TT01) (Photorhabdus luminescens subsp. laumondii).